Consider the following 951-residue polypeptide: Valine--tRNA ligase (951 aa).

The 'HIGH' region motif lies at 42 to 52; that stretch reads PNVTGSLHMGH. The 'KMSKS' region motif lies at 554–558; that stretch reads KMSKS. Lys557 contacts ATP. Residues 880–944 are a coiled coil; sequence AGLINKEDEL…AEAKAKLIEQ (65 aa).

Belongs to the class-I aminoacyl-tRNA synthetase family. ValS type 1 subfamily. In terms of assembly, monomer.

It localises to the cytoplasm. The catalysed reaction is tRNA(Val) + L-valine + ATP = L-valyl-tRNA(Val) + AMP + diphosphate. In terms of biological role, catalyzes the attachment of valine to tRNA(Val). As ValRS can inadvertently accommodate and process structurally similar amino acids such as threonine, to avoid such errors, it has a 'posttransfer' editing activity that hydrolyzes mischarged Thr-tRNA(Val) in a tRNA-dependent manner. The sequence is that of Valine--tRNA ligase from Escherichia coli O6:H1 (strain CFT073 / ATCC 700928 / UPEC).